A 265-amino-acid polypeptide reads, in one-letter code: Histidine racemase (265 aa).

Residue cysteine 67 is the Proton acceptor of the active site. The Proton donor role is filled by cysteine 209.

Belongs to the histidine racemase family. Homodimer.

The enzyme catalyses L-histidine = D-histidine. Activity is not affected by buffer composition (PO(4) or Tris), ions (SO(4)(2-), Mg(2+) and EDTA) or the PLP inhibitor hydroxylamine. However, the activity is hindered by iodoacetamide and Hg(2+), which are known inhibitors of enzymes with catalytic thiols. Functionally, cofactor-independent isomerase that catalyzes the reversible conversion of L-histidine to D-histidine. Shows weak activity with L,L-lanthionine. The catalytic turnover is 10'000-fold faster with L-histidine than with L,L-lanthionine. May play a role in growth of F.nucleatum. The sequence is that of Histidine racemase from Fusobacterium nucleatum subsp. nucleatum (strain ATCC 25586 / DSM 15643 / BCRC 10681 / CIP 101130 / JCM 8532 / KCTC 2640 / LMG 13131 / VPI 4355).